Reading from the N-terminus, the 299-residue chain is DNA-binding transcriptional activator HetR (299 aa).

Residues 1–98 are DNA-binding domain; that stretch reads MSNDIDLIKR…GKLLKTLGSQ (98 aa). DNA-binding positions include 34–40 and 60–76; these read RHGAFLD and NLRM…KRVK. Residues 99 to 216 form a flap domain region; the sequence is EPRYLIQFPY…FYALTRPFYA (118 aa). The active site involves Ser152. Residue 179–181 coordinates DNA; that stretch reads SEA. The tract at residues 217–299 is hood domain; that stretch reads PADDQERTYI…LQMVFGRKED (83 aa).

This sequence belongs to the peptidase S48 family. In terms of assembly, upon expression in E.coli most protein is monomeric, although varying amounts of homodimer can be seen. Homodimer; disulfide-linked. Homodimer. Binds the 6 residue C-terminal peptide of PatS; one peptide binds to each subunit. In bacterial two-hybrid assays interacts robustly with itself, Alr2902 and Alr3234 and more weakly with Als1930. Post-translationally, probably autodegrades.

Protease activity is inhibited by PMSF, suggesting this is a serine protease. In terms of biological role, controls heterocyst differentiation. Dimerization is required for DNA-binding. Has both a protease and a DNA-binding activity. Functionally, controls heterocyst differentiation; increased expression leads to more heterocysts than usual. Has protease activity. Binds the promoter regions of hetR, hepA and patS and is required for their expression. Dimerization is required for DNA-binding, DNA-binding is inhibited by the PatS6 peptide. Binds the inverted repeat 5'-GTAGGCGAGGGGTCTAACCCCTCATTACC-3' found in the hetP promoter, required for expression of hetP. The protein is DNA-binding transcriptional activator HetR of Nostoc sp. (strain PCC 7120 / SAG 25.82 / UTEX 2576).